The chain runs to 449 residues: NADH-quinone oxidoreductase subunit H (449 aa).

9 helical membrane-spanning segments follow: residues 29–49 (ILLK…FAIV), 96–116 (PIFI…FAVI), 136–156 (LPVS…GLIL), 177–197 (IISY…YAGT), 211–231 (WYIV…GETN), 259–279 (FFFL…TTLF), 298–318 (WVPL…FIWL), 330–350 (FMSF…LAVA), and 365–385 (WLVG…IDPG). Positions 393-402 (LEEAEQRKLA) are enriched in basic and acidic residues. Positions 393–449 (LEEAEQRKLAEAPSLDRIPWPPPPQAAGRGRPAVSAGASANGSSTVIPADPGPRQER) are disordered. Residues 418-436 (AAGRGRPAVSAGASANGSS) are compositionally biased toward low complexity.

This sequence belongs to the complex I subunit 1 family. In terms of assembly, NDH-1 is composed of 14 different subunits. Subunits NuoA, H, J, K, L, M, N constitute the membrane sector of the complex.

Its subcellular location is the cell membrane. The enzyme catalyses a quinone + NADH + 5 H(+)(in) = a quinol + NAD(+) + 4 H(+)(out). Functionally, NDH-1 shuttles electrons from NADH, via FMN and iron-sulfur (Fe-S) centers, to quinones in the respiratory chain. The immediate electron acceptor for the enzyme in this species is believed to be ubiquinone. Couples the redox reaction to proton translocation (for every two electrons transferred, four hydrogen ions are translocated across the cytoplasmic membrane), and thus conserves the redox energy in a proton gradient. This subunit may bind ubiquinone. This chain is NADH-quinone oxidoreductase subunit H, found in Frankia casuarinae (strain DSM 45818 / CECT 9043 / HFP020203 / CcI3).